A 623-amino-acid chain; its full sequence is MAFEALTGINGDLITRSWSASKQAYLTERYHKEEAGAVVIFAFQPSFSEKDFFDPDNKSSFGEIKLNRVQFPCMRKIGKGDVATVNEAFLKNLEAIIDPRTSFQASVEMAVRSRKQIVFTGHSSGGATAILATVWYLEKYFIRNPNVYLEPRCVTFGAPLVGDSIFSHALGREKWSRFFVNFVSRFDIVPRIMLARKASVEETLPHVLAQLDPRKSSVQESEQRITEFYTRVMRDTSTVANQAVCELTGSAEAFLETLSSFLELSPYRPAGTFVFSTEKRLVAVNNSDAILQMLFYTSQASDEQEWSLIPFRSIRDHHSYEELVQSMGKKLFNHLDGENSIESTLNDLGVSTRGRQYVQAALEEEKKRVENQKKIIQVIEQERFLKKLAWIEDEYKPKCQAHKNGYYDSFKVSNEENDFKANVKRAELAGVFDEVLGLMKKCQLPDEFEGDIDWIKLATRYRRLVEPLDIANYHRHLKNEDTGPYMKRGRPTRYIYAQRGYEHYILKPNGMIAEDVFWNKVNGLNLGLQLEEIQETLKNSGSECGSCFWAEVEELKGKPYEEVEVRVKTLEGMLGEWITDGEVDDKEIFLEGSTFRKWWITLPKNHKSHSPLRDYMMDEITDT.

Ala2 is subject to N-acetylalanine. Ser123 functions as the Nucleophile in the catalytic mechanism. Catalysis depends on charge relay system residues Asp187 and His317. Positions 358-383 form a coiled coil; that stretch reads VQAALEEEKKRVENQKKIIQVIEQER.

Homodimer. Interacts with RPS4, RPS6, SNC1, SRFR1, AvrRps4 and HopA1. Part of a nuclear complex made of EDS1, PAD4 and SAG101, that can be redirected to the cytoplasm in the presence of an extranuclear form of EDS1. Interacts (via N-terminus) with PAD4 (via N-terminus). Interacts (via N-terminus) with SAG101. EDS1-SAG101 and EDS1-PAD4 form separate complexes in pathogen-unchallenged cells. Part of a nuclear protein complex made of VICTR, PAD4 and EDS1. Interacts with VICTR.

The protein resides in the nucleus. It localises to the cytoplasm. The protein localises to the microsome. Functionally, positive regulator of basal resistance and of effector-triggered immunity specifically mediated by TIR-NB-LRR (TNL) resistance proteins. Disruption by bacterial effector of EDS1-TIR-NB-LRR resistance protein interactions constitutes the first step in resistance activation. Acts redundantly with salicylic acid to regulate resistance gene-mediated signaling. Triggers early plant defenses and hypersensitive response independently of PAD4, and then recruits PAD4 to potentiate plant defenses through the accumulation of salicylic acid. Nuclear localization is essential for basal and TNL-conditioned immunity and for reprogramming defense gene expression, while cytoplasmic EDS1 is required to induce a complete immune response. Heterodimerization with PAD4 and/or SGA101 is necessary for TNL-mediated effector-triggered immunity. Contributes to nonhost resistance against E.amylovora. Loss of EDS1-PAD4 interaction compromises basal but not TNL-triggered resistance. Necessary for systemic acquired resistance (SAR) signal generation and perception. Has no direct lipase activity. Putative lipase activity is dispensable for immune functions. The sequence is that of Protein EDS1 from Arabidopsis thaliana (Mouse-ear cress).